A 96-amino-acid polypeptide reads, in one-letter code: MVEFSHTKKIGSAGRFGSRYGRKIRVRLRDVEIKQNKDYKCPVCAFPKLKRAGTSIWVCEKCGAKIAGGAYTPETGAGKVVTKAIRRVIESKSREI.

4 residues coordinate Zn(2+): Cys41, Cys44, Cys59, and Cys62. A C4-type zinc finger spans residues 41-62; it reads CPVCAFPKLKRAGTSIWVCEKC.

It belongs to the eukaryotic ribosomal protein eL43 family. Putative zinc-binding subfamily. In terms of assembly, part of the 50S ribosomal subunit. The cofactor is Zn(2+).

Functionally, binds to the 23S rRNA. The protein is Large ribosomal subunit protein eL43 of Methanococcus maripaludis (strain DSM 14266 / JCM 13030 / NBRC 101832 / S2 / LL).